Here is a 429-residue protein sequence, read N- to C-terminus: MKKQRNLRSMAAQAIEQVVEQGQSLSNILPPLQQKVSDKDKALLQELCFGVLRTLSQLDWLINKLMARPMTGKQRTVHYLIMVGLYQLLYTRIPPHAALAETVEGAVAIKRPQLKGLINGVLRQFQRQQDELLAEFNASDARYLHPSWLLKRLQKAYPEQWQSIVEANNQRPPMWLRVNRTHHSRDSWLALLDEAGMKGFPHADYPDAVQLETPAPVHALPGFEEGWVTVQDASAQGCMTWLAPQNGEHILDLCAAPGGKTTHILEVAPEAQVLAVDIDEQRLSRVYDNLKRLGMKATVKQGDGRYPSQWCGEQQFDRILLDAPCSATGVIRRHPDIKWLRRDRDIPELAQLQSEILDAIWSHLKSGGTLVYATCSMLPEENSLQIKAFLQRTADAELCETGTPEQPGKQNLPGAEEGDGFFYAKLIKK.

S-adenosyl-L-methionine contacts are provided by residues 254-260 (CAAPGGK), aspartate 277, aspartate 303, and aspartate 322. The active-site Nucleophile is cysteine 375.

Belongs to the class I-like SAM-binding methyltransferase superfamily. RsmB/NOP family.

It localises to the cytoplasm. The catalysed reaction is cytidine(967) in 16S rRNA + S-adenosyl-L-methionine = 5-methylcytidine(967) in 16S rRNA + S-adenosyl-L-homocysteine + H(+). Specifically methylates the cytosine at position 967 (m5C967) of 16S rRNA. This is Ribosomal RNA small subunit methyltransferase B from Escherichia coli (strain UTI89 / UPEC).